An 83-amino-acid polypeptide reads, in one-letter code: Mu-theraphotoxin-Hhn2j 4 (83 aa).

The first 21 residues, 1-21 (MKASMFLALAGSVLLFVVGYA), serve as a signal peptide directing secretion. A propeptide spanning residues 22–48 (SESEEKEFPIELLSKIFAVDVFKGEER) is cleaved from the precursor. 3 disulfide bridges follow: C50/C65, C57/C70, and C64/C77. Residue L81 is modified to Leucine amide.

This sequence belongs to the neurotoxin 10 (Hwtx-1) family. 15 (Hntx-3) subfamily. In terms of assembly, monomer. In terms of tissue distribution, expressed by the venom gland.

Its subcellular location is the secreted. In terms of biological role, lethal neurotoxin. Selectively blocks tetrodotoxin-sensitive voltage-gated sodium channels (Nav). Does not affect tetrodotoxin-resistant voltage-gated sodium channels or calcium channels. The sequence is that of Mu-theraphotoxin-Hhn2j 4 from Cyriopagopus hainanus (Chinese bird spider).